Here is a 164-residue protein sequence, read N- to C-terminus: MSDLCPPTAPFFGFMGAAVALIFANLGAAYGTAKSGVGVSSMGVMKPDLVMKSIIPVVMAGVLGIYGLIIAVIIGNGVKGPEGGKPQYSSFTGFAHLAAGLACGLSGMAAGIAIGIVGDAGVRASAQQAKLYVGMVLILIFAEALGLYGLIVGLILTSKEAPCS.

The Lumenal segment spans residues 1–10 (MSDLCPPTAP). The chain crosses the membrane as a helical span at residues 11–31 (FFGFMGAAVALIFANLGAAYG). Over 32-53 (TAKSGVGVSSMGVMKPDLVMKS) the chain is Cytoplasmic. The helical transmembrane segment at 54–74 (IIPVVMAGVLGIYGLIIAVII) threads the bilayer. Over 75-96 (GNGVKGPEGGKPQYSSFTGFAH) the chain is Lumenal. The helical transmembrane segment at 97 to 118 (LAAGLACGLSGMAAGIAIGIVG) threads the bilayer. Residues 119-130 (DAGVRASAQQAK) are Cytoplasmic-facing. A helical transmembrane segment spans residues 131 to 155 (LYVGMVLILIFAEALGLYGLIVGLI). Over 156 to 164 (LTSKEAPCS) the chain is Lumenal.

The protein belongs to the V-ATPase proteolipid subunit family. V-ATPase is a heteromultimeric enzyme composed of a peripheral catalytic V1 complex (main components: subunits A, B, C, D, E, and F) attached to an integral membrane V0 proton pore complex (main component: the proteolipid protein; which is present as a hexamer that forms the proton-conducting pore).

The protein localises to the vacuole membrane. Its function is as follows. Proton-conducting pore forming subunit of the membrane integral V0 complex of vacuolar ATPase. V-ATPase is responsible for acidifying a variety of intracellular compartments in eukaryotic cells. In Chrysotila carterae (Marine alga), this protein is V-type proton ATPase 16 kDa proteolipid subunit (VAP).